The chain runs to 314 residues: DNA-directed RNA polymerase subunit alpha (314 aa).

The alpha N-terminal domain (alpha-NTD) stretch occupies residues 1 to 228 (MIEIEKPRIE…EHLNIFVDLT (228 aa)). Positions 245 to 314 (KEKVLEMSIE…DLGLGLRKED (70 aa)) are alpha C-terminal domain (alpha-CTD).

The protein belongs to the RNA polymerase alpha chain family. Homodimer. The RNAP catalytic core consists of 2 alpha, 1 beta, 1 beta' and 1 omega subunit. When a sigma factor is associated with the core the holoenzyme is formed, which can initiate transcription.

It catalyses the reaction RNA(n) + a ribonucleoside 5'-triphosphate = RNA(n+1) + diphosphate. DNA-dependent RNA polymerase catalyzes the transcription of DNA into RNA using the four ribonucleoside triphosphates as substrates. The polypeptide is DNA-directed RNA polymerase subunit alpha (Macrococcus caseolyticus (strain JCSC5402) (Macrococcoides caseolyticum)).